A 342-amino-acid polypeptide reads, in one-letter code: tRNA N6-adenosine threonylcarbamoyltransferase (342 aa).

Fe cation is bound by residues H111 and H115. Substrate-binding positions include 133–137 (AVSGG), D166, G179, D183, and N273. Residue D301 coordinates Fe cation.

Belongs to the KAE1 / TsaD family. The cofactor is Fe(2+).

The protein localises to the cytoplasm. It carries out the reaction L-threonylcarbamoyladenylate + adenosine(37) in tRNA = N(6)-L-threonylcarbamoyladenosine(37) in tRNA + AMP + H(+). Required for the formation of a threonylcarbamoyl group on adenosine at position 37 (t(6)A37) in tRNAs that read codons beginning with adenine. Is involved in the transfer of the threonylcarbamoyl moiety of threonylcarbamoyl-AMP (TC-AMP) to the N6 group of A37, together with TsaE and TsaB. TsaD likely plays a direct catalytic role in this reaction. The sequence is that of tRNA N6-adenosine threonylcarbamoyltransferase from Syntrophotalea carbinolica (strain DSM 2380 / NBRC 103641 / GraBd1) (Pelobacter carbinolicus).